A 596-amino-acid polypeptide reads, in one-letter code: Choline dehydrogenase, mitochondrial (596 aa).

A mitochondrion-targeting transit peptide spans 1–34 (MWQVLRGWRKGWQSPRGALAWAVQGQPCPPCSRA). 44–73 (TFVVVGAGSAGCVLASRLTEDPNHRVLLLE) is an FAD binding site. At lysine 438 the chain carries N6-succinyllysine. N6-acetyllysine; alternate occurs at positions 486 and 498. Residues lysine 486 and lysine 498 each carry the N6-succinyllysine; alternate modification. Histidine 513 (proton acceptor) is an active-site residue. Lysine 582 is subject to N6-acetyllysine.

This sequence belongs to the GMC oxidoreductase family. Requires FAD as cofactor. Post-translationally, acetylation of Lys-498 is observed in liver mitochondria from fasted mice but not from fed mice.

The protein resides in the mitochondrion inner membrane. It carries out the reaction choline + A = betaine aldehyde + AH2. It participates in amine and polyamine biosynthesis; betaine biosynthesis via choline pathway; betaine aldehyde from choline (cytochrome c reductase route): step 1/1. This chain is Choline dehydrogenase, mitochondrial (Chdh), found in Mus musculus (Mouse).